The primary structure comprises 74 residues: SPbeta prophage-derived uncharacterized HTH-type transcriptional regulator YopS (74 aa).

The 56-residue stretch at 11–66 (IPELCRKKDITINELSEITGIKKQQLSDYNRLVKVDMSIRTAKRIAAALDCNVEDL) folds into the HTH cro/C1-type domain. A DNA-binding region (H-T-H motif) is located at residues 22–41 (INELSEITGIKKQQLSDYNR).

In Bacillus subtilis (strain 168), this protein is SPbeta prophage-derived uncharacterized HTH-type transcriptional regulator YopS (yopS).